The primary structure comprises 469 residues: Cyclin-dependent kinase 14 (469 aa).

Residues Ser-24, Ser-78, and Ser-95 each carry the phosphoserine modification. The segment at 103–133 is disordered; it reads FKSSSAGKESPKVRRHSSPSSPTSPKFGKAD. Phosphoserine is present on Ser-134. Positions 135–419 constitute a Protein kinase domain; sequence YEKLEKLGEG…AQAALSHEYF (285 aa). ATP contacts are provided by residues 141 to 149 and Lys-164; that span reads LGEGSYATV. Catalysis depends on Asp-256, which acts as the Proton acceptor. The interval 449–469 is disordered; it reads ESMRAFGKNNSYGKSLSNSKH. The span at 456–469 shows a compositional bias: polar residues; the sequence is KNNSYGKSLSNSKH.

This sequence belongs to the protein kinase superfamily. CMGC Ser/Thr protein kinase family. CDC2/CDKX subfamily. In terms of assembly, found in a complex with LRP6, CCNY and CAPRIN2 during G2/M stage; CAPRIN2 functions as a scaffold for the complex by binding to CCNY via its N terminus and to CDK14 via its C terminus. Interacts with CCNY; CCNY mediates its recruitment to the plasma membrane and promotes phosphorylation of LRP6. Interacts with CCDN3 and CDKN1A. Interacts with SEPT8. Interacts with 14-3-3 proteina YWHAB, YWHAE, YWHAH and YWHAQ. In terms of tissue distribution, in the adult, widely expressed at low levels except in brain, kidney and testis where expression is high. In the brain, detected in cortex, hippocampus, dentate gyrus, amygdala cortex, parasubiculum and cerebellum. In the embryo, expressed predominantly in the nervous system.

The protein resides in the cell membrane. The protein localises to the cytoplasm. Its subcellular location is the nucleus. It carries out the reaction L-seryl-[protein] + ATP = O-phospho-L-seryl-[protein] + ADP + H(+). The catalysed reaction is L-threonyl-[protein] + ATP = O-phospho-L-threonyl-[protein] + ADP + H(+). Serine/threonine-protein kinase activity is promoted by associated cyclins CCDN3 and CCNY and repressed by CDKN1A. Functionally, serine/threonine-protein kinase involved in the control of the eukaryotic cell cycle, whose activity is controlled by an associated cyclin. Acts as a cell-cycle regulator of Wnt signaling pathway during G2/M phase by mediating the phosphorylation of LRP6 at 'Ser-1490', leading to the activation of the Wnt signaling pathway. Acts as a regulator of cell cycle progression and cell proliferation via its interaction with CCDN3. Phosphorylates RB1 in vitro, however the relevance of such result remains to be confirmed in vivo. May also play a role in meiosis, neuron differentiation and may indirectly act as a negative regulator of insulin-responsive glucose transport. The chain is Cyclin-dependent kinase 14 (Cdk14) from Mus musculus (Mouse).